Here is a 402-residue protein sequence, read N- to C-terminus: Dynactin subunit 2 (402 aa).

The tract at residues 1–26 is disordered; the sequence is MADPKYADLPGIARNEPDVYETSDLP. 2 coiled-coil regions span residues 101–132 and 357–402; these read PQQR…SAAE and VHLD…KRLQ.

Belongs to the dynactin subunit 2 family. As to quaternary structure, subunit of dynactin, a multiprotein complex part of a tripartite complex with dynein and a adapter, such as BICDL1, BICD2 or HOOK3. The dynactin complex is built around ACTR1A/ACTB filament and consists of an actin-related filament composed of a shoulder domain, a pointed end and a barbed end. Its length is defined by its flexible shoulder domain. The soulder is composed of 2 DCTN1 subunits, 4 DCTN2 and 2 DCTN3.

It is found in the cytoplasm. Its subcellular location is the cytoskeleton. The protein resides in the microtubule organizing center. The protein localises to the centrosome. It localises to the membrane. Its function is as follows. Part of the dynactin complex that activates the molecular motor dynein for ultra-processive transport along microtubules. In the dynactin soulder domain, binds the ACTR1A filament and acts as a molecular ruler to determine the length. Modulates cytoplasmic dynein binding to an organelle, and plays a role in prometaphase chromosome alignment and spindle organization during mitosis. Involved in anchoring microtubules to centrosomes. This Gallus gallus (Chicken) protein is Dynactin subunit 2 (DCTN2).